The sequence spans 191 residues: NAD(P)H-dependent FMN reductase LOT6 (191 aa).

Residues Arg-11, 94–97, and Tyr-124 each bind FMN; that span reads QYNW.

As to quaternary structure, homodimer.

It is found in the cytoplasm. The protein localises to the nucleus. The enzyme catalyses FMNH2 + NADP(+) = FMN + NADPH + 2 H(+). It catalyses the reaction FMNH2 + NAD(+) = FMN + NADH + 2 H(+). Functionally, has several reductase activities that are NAD(P)H-dependent and involve FMN as a cofactor, ferricyanide being the best substrate for reduction. May be involved in ferric iron assimilation. This Saccharomyces cerevisiae (strain ATCC 204508 / S288c) (Baker's yeast) protein is NAD(P)H-dependent FMN reductase LOT6 (LOT6).